The chain runs to 181 residues: Protein Syd (181 aa).

It belongs to the Syd family.

Its subcellular location is the cell inner membrane. Interacts with the SecY protein in vivo. May bind preferentially to an uncomplexed state of SecY, thus functioning either as a chelating agent for excess SecY in the cell or as a regulatory factor that negatively controls the translocase function. The chain is Protein Syd from Cronobacter sakazakii (strain ATCC BAA-894) (Enterobacter sakazakii).